Here is a 322-residue protein sequence, read N- to C-terminus: Protein mono-ADP-ribosyltransferase PARP16 (322 aa).

Residues 1-287 (MQLSNRAAAR…RASSQLSWLS (287 aa)) are Cytoplasmic-facing. One can recognise a PARP alpha-helical domain in the interval 5–91 (NRAAAREAAS…AWDLVSWILS (87 aa)). Residues 94–279 (ILTIHSAKKA…VYSQKQPKRA (186 aa)) enclose the PARP catalytic domain. Positions 152, 182, and 254 each coordinate NAD(+). Residues 288-308 (SHWFVIMMSLYLLLLLIVSVT) form a helical membrane-spanning segment. Over 309-322 (NSSVFHHFWNRVKR) the chain is Lumenal.

Belongs to the ARTD/PARP family. Interacts with KPNB1. In terms of processing, auto-mono-ADP-ribosylated.

The protein resides in the endoplasmic reticulum membrane. It carries out the reaction L-aspartyl-[protein] + NAD(+) = 4-O-(ADP-D-ribosyl)-L-aspartyl-[protein] + nicotinamide. The catalysed reaction is L-lysyl-[protein] + NAD(+) = N(6)-(ADP-D-ribosyl)-L-lysyl-[protein] + nicotinamide + H(+). It catalyses the reaction L-glutamyl-[protein] + NAD(+) = 5-O-(ADP-D-ribosyl)-L-glutamyl-[protein] + nicotinamide. Its activity is regulated as follows. In absence of activation signal, PARP16 is autoinhibited by the PARP alpha-helical domain (also named HD region), which prevents effective NAD(+)-binding. Activity is highly stimulated by signals, which unfold the PARP alpha-helical domain, relieving autoinhibition. In terms of biological role, intracellular mono-ADP-ribosyltransferase that plays a role in different processes, such as protein translation and unfolded protein response (UPR), through the mono-ADP-ribosylation of proteins involved in those processes. Acts as an inhibitor of protein translation by catalyzing mono-ADP-ribosylation of ribosomal subunits, such as RPL14 and RPS6, thereby inhibiting polysome assembly and mRNA loading. Mono-ADP-ribosylation of ribosomal subunits is promoted by NMNAT2. Involved in the unfolded protein response (UPR) by ADP-ribosylating and activating EIF2AK3 and ERN1, two important UPR effectors. May also mediate mono-ADP-ribosylation of karyopherin KPNB1 a nuclear import factor. May not modify proteins on arginine or cysteine residues compared to other mono-ADP-ribosyltransferases. The sequence is that of Protein mono-ADP-ribosyltransferase PARP16 from Mus musculus (Mouse).